A 236-amino-acid polypeptide reads, in one-letter code: DNA repair protein RecO (236 aa).

Belongs to the RecO family.

Involved in DNA repair and RecF pathway recombination. The sequence is that of DNA repair protein RecO from Stutzerimonas stutzeri (strain A1501) (Pseudomonas stutzeri).